Consider the following 369-residue polypeptide: Flagellar P-ring protein (369 aa).

The first 22 residues, 1–22, serve as a signal peptide directing secretion; the sequence is MIKLKQLIAATLLLSTAFGVHA.

The protein belongs to the FlgI family. As to quaternary structure, the basal body constitutes a major portion of the flagellar organelle and consists of four rings (L,P,S, and M) mounted on a central rod.

The protein localises to the periplasm. Its subcellular location is the bacterial flagellum basal body. Its function is as follows. Assembles around the rod to form the L-ring and probably protects the motor/basal body from shearing forces during rotation. The sequence is that of Flagellar P-ring protein from Pseudomonas syringae pv. syringae (strain B728a).